The following is a 307-amino-acid chain: Mitochondrial brown fat uncoupling protein 1 (307 aa).

Topologically, residues methionine 1–glutamine 10 are mitochondrial intermembrane. Residues proline 11–phenylalanine 32 form a helical membrane-spanning segment. Solcar repeat units lie at residues proline 11–tyrosine 102, proline 111–alanine 201, and aspartate 210–glutamate 295. Over proline 33–lysine 73 the chain is Mitochondrial matrix. Residue lysine 56 coordinates fatty acid 16:0. Residues leucine 74–tyrosine 96 traverse the membrane as a helical segment. Topologically, residues aspartate 97–arginine 116 are mitochondrial intermembrane. The helical transmembrane segment at isoleucine 117–proline 133 threads the bilayer. Topologically, residues threonine 134 to threonine 178 are mitochondrial matrix. The helical transmembrane segment at proline 179 to tyrosine 195 threads the bilayer. Residues aspartate 196–valine 212 lie on the Mitochondrial intermembrane side of the membrane. A helical transmembrane segment spans residues proline 213 to proline 232. At alanine 233–alanine 266 the chain is on the mitochondrial matrix side. Cysteine 254 carries the cysteine sulfenic acid (-SOH) modification. A helical membrane pass occupies residues phenylalanine 267–phenylalanine 289. Position 269 (lysine 269) interacts with fatty acid 16:0. The Mitochondrial intermembrane portion of the chain corresponds to glutamate 290–threonine 307.

The protein belongs to the mitochondrial carrier (TC 2.A.29) family. Most probably functions as a monomer. Binds one purine nucleotide per monomer. However, has also been suggested to function as a homodimer or a homotetramer. Tightly associates with cardiolipin in the mitochondrion inner membrane; may stabilize and regulate its activity. Post-translationally, may undergo sulfenylation upon cold exposure. May increase the sensitivity of UCP1 thermogenic function to the activation by noradrenaline probably through structural effects. In terms of processing, may undergo ubiquitin-mediated proteasomal degradation. Brown adipose tissue.

Its subcellular location is the mitochondrion inner membrane. The catalysed reaction is H(+)(in) = H(+)(out). Its activity is regulated as follows. Has no constitutive proton transporter activity and has to be activated by long-chain fatty acids/LCFAs. Inhibited by purine nucleotides. Both purine nucleotides and LCFAs bind the cytosolic side of the transporter and directly compete to activate or inhibit it. Activated by noradrenaline and reactive oxygen species. Despite lacking canonical translational encoding for selenocysteine, a small pool of the protein has been observed to selectively incorporate selenocysteine at 'Cys-254'. Selenocysteine-modified protein is highly sensitive to redox modification and may constitute a pool of protein highly sensitive to activation by elevated levels of reactive oxygen species (ROS). Its function is as follows. Mitochondrial protein responsible for thermogenic respiration, a specialized capacity of brown adipose tissue and beige fat that participates in non-shivering adaptive thermogenesis to temperature and diet variations and more generally to the regulation of energy balance. Functions as a long-chain fatty acid/LCFA and proton symporter, simultaneously transporting one LCFA and one proton through the inner mitochondrial membrane. However, LCFAs remaining associated with the transporter via their hydrophobic tails, it results in an apparent transport of protons activated by LCFAs. Thereby, dissipates the mitochondrial proton gradient and converts the energy of substrate oxydation into heat instead of ATP. Regulates the production of reactive oxygen species/ROS by mitochondria. This is Mitochondrial brown fat uncoupling protein 1 from Phodopus sungorus (Striped hairy-footed hamster).